The following is a 270-amino-acid chain: 3-methyl-2-oxobutanoate hydroxymethyltransferase (270 aa).

Residues Asp48 and Asp87 each contribute to the Mg(2+) site. Residues 48 to 49, Asp87, and Lys117 contribute to the 3-methyl-2-oxobutanoate site; that span reads DS. Glu119 lines the Mg(2+) pocket. Glu186 functions as the Proton acceptor in the catalytic mechanism.

The protein belongs to the PanB family. Homodecamer; pentamer of dimers. Mg(2+) serves as cofactor.

The protein localises to the cytoplasm. It catalyses the reaction 3-methyl-2-oxobutanoate + (6R)-5,10-methylene-5,6,7,8-tetrahydrofolate + H2O = 2-dehydropantoate + (6S)-5,6,7,8-tetrahydrofolate. It participates in cofactor biosynthesis; (R)-pantothenate biosynthesis; (R)-pantoate from 3-methyl-2-oxobutanoate: step 1/2. Catalyzes the reversible reaction in which hydroxymethyl group from 5,10-methylenetetrahydrofolate is transferred onto alpha-ketoisovalerate to form ketopantoate. The polypeptide is 3-methyl-2-oxobutanoate hydroxymethyltransferase (Synechococcus sp. (strain RCC307)).